The chain runs to 137 residues: MIKNIGVDQIEVDRIAKVVDRGDGFARKVLTDREFAQYQDLTHKRKIEYLGGRFAIKEAFSKAWGTGIGQAVSFEDVETLRTESGAPVTTSRIFTGRIFSSIAHDDHEIVAVVVLEEPAGWRRAIGKLLHLLSGRKK.

Residues aspartate 8 and glutamate 58 each contribute to the Mg(2+) site.

The protein belongs to the P-Pant transferase superfamily. AcpS family. Mg(2+) serves as cofactor.

It localises to the cytoplasm. It catalyses the reaction apo-[ACP] + CoA = holo-[ACP] + adenosine 3',5'-bisphosphate + H(+). Transfers the 4'-phosphopantetheine moiety from coenzyme A to a Ser of acyl-carrier-protein. The chain is Holo-[acyl-carrier-protein] synthase from Lactobacillus delbrueckii subsp. bulgaricus (strain ATCC 11842 / DSM 20081 / BCRC 10696 / JCM 1002 / NBRC 13953 / NCIMB 11778 / NCTC 12712 / WDCM 00102 / Lb 14).